The following is a 213-amino-acid chain: Kynurenine formamidase (213 aa).

Residue tryptophan 18 coordinates substrate. The Zn(2+) site is built by histidine 48, histidine 52, and aspartate 54. Histidine 58 serves as the catalytic Proton donor/acceptor. Histidine 160 and glutamate 172 together coordinate Zn(2+).

The protein belongs to the Cyclase 1 superfamily. KynB family. In terms of assembly, homodimer. It depends on Zn(2+) as a cofactor.

The enzyme catalyses N-formyl-L-kynurenine + H2O = L-kynurenine + formate + H(+). Its pathway is amino-acid degradation; L-tryptophan degradation via kynurenine pathway; L-kynurenine from L-tryptophan: step 2/2. Catalyzes the hydrolysis of N-formyl-L-kynurenine to L-kynurenine, the second step in the kynurenine pathway of tryptophan degradation. This chain is Kynurenine formamidase, found in Burkholderia thailandensis (strain ATCC 700388 / DSM 13276 / CCUG 48851 / CIP 106301 / E264).